We begin with the raw amino-acid sequence, 315 residues long: Mitochondrial glutamate carrier 2 (315 aa).

Solcar repeat units lie at residues 6–92 (LSIT…FRRL), 100–210 (RNLK…LNNL), and 219–308 (ASFA…GIGE). A run of 3 helical transmembrane segments spans residues 12–32 (LING…IDLA), 61–81 (FFGM…EKAI), and 106–126 (MLAG…MEML). The disordered stretch occupies residues 141 to 160 (QGSASAPSTSRSYTTGSAST). The segment covering 142–159 (GSASAPSTSRSYTTGSAS) has biased composition (polar residues). Phosphoserine is present on Ser-145. 3 helical membrane passes run 185–205 (GLGA…PLFA), 225–245 (FVSG…LDVL), and 288–308 (ALVI…GIGE).

This sequence belongs to the mitochondrial carrier (TC 2.A.29) family. In terms of tissue distribution, expressed in brain, to a lesser extent in testis, and poorly in all the other tissues.

Its subcellular location is the mitochondrion inner membrane. The enzyme catalyses L-glutamate(in) + H(+)(in) = L-glutamate(out) + H(+)(out). Functionally, responsible for the transport of glutamate from the cytosol into the mitochondrial matrix with the concomitant import of a proton (symport system). The protein is Mitochondrial glutamate carrier 2 of Homo sapiens (Human).